The sequence spans 233 residues: 2-C-methyl-D-erythritol 4-phosphate cytidylyltransferase (233 aa).

Belongs to the IspD/TarI cytidylyltransferase family. IspD subfamily.

The enzyme catalyses 2-C-methyl-D-erythritol 4-phosphate + CTP + H(+) = 4-CDP-2-C-methyl-D-erythritol + diphosphate. It functions in the pathway isoprenoid biosynthesis; isopentenyl diphosphate biosynthesis via DXP pathway; isopentenyl diphosphate from 1-deoxy-D-xylulose 5-phosphate: step 2/6. Catalyzes the formation of 4-diphosphocytidyl-2-C-methyl-D-erythritol from CTP and 2-C-methyl-D-erythritol 4-phosphate (MEP). The protein is 2-C-methyl-D-erythritol 4-phosphate cytidylyltransferase of Nitrosomonas eutropha (strain DSM 101675 / C91 / Nm57).